We begin with the raw amino-acid sequence, 420 residues long: CinA-like protein (420 aa).

Belongs to the CinA family.

The polypeptide is CinA-like protein (Chloroherpeton thalassium (strain ATCC 35110 / GB-78)).